Consider the following 1077-residue polypeptide: MSSQSHPDGLSGRDQPVELLNPARVNHMPSTVDVATALPLQVAPAAVPMDLRLDHQFSLPLEPALREQQLQQELLALKQKQQIQRQILIAEFQRQHEQLSRQHEAQLHEHIKQQQEMLAMKHQQELLEHQRKLERHRQEQELEKQHREQKLQQLKNKEKGKESAVASTEVKMKLQEFVLNKKKALAHRNLNHCMSSDPRYWYGKTQHSSLDQSSPPQSGVSASYNHPVLGMYDAKDDFPLRKTASEPNLKLRSRLKQKVAERRSSPLLRRKDGPVATALKKRPLDVTDSACSSAPGSGPSSPNSSSGNVSTENGIAPTVPSTPAETSLAHRLVTREGSVAPLPLYTSPSLPNITLGLPATGPAAGAAGQQDAERLALPALQQRISLFPGTHLTPYLSTSPLERDGGAAHNPLLQHMVLLEQPPTQTPLVTGLGALPLHTQSLVGADRVSPSIHKLRQHRPLGRTQSAPLPQNAQALQHLVIQQQHQQFLEKHKQQFQQQQLHLSKMISKPSEPPRQPESHPEETEEELREHQALLDEPYLDRLPGQKEPSLAGVQVKQEPIESEEEEVEATREAEPSQRPATEQELLFRQQALLLEQQRIHQLRNYQASMEAAGIPVSFGSHRPLSRAQSSPASATFPMSVQEPPTKPRFTTGLVYDTLMLKHQCTCGNTNSHPEHAGRIQSIWSRLQETGLRGKCECIRGRKATLEELQTVHSEAHTLLYGTNPLNRQKLDSSLTSVFVRLPCGGVGVDSDTIWNEVHSSGAARLAVGCVVELVFKVATGELKNGFAVVRPPGHHAEESTPMGFCYFNSVAIAAKLLQQRLNVSKILIVDWDVHHGNGTQQAFYNDPNVLYMSLHRYDDGNFFPGSGAPDEVGTGPGVGFNVNMAFTGGLDPPMGDAEYLAAFRTVVMPIANEFAPDVVLVSSGFDAVEGHPTPLGGYNLSAKCFGYLTKQLMGLAGGRIVLALEGGHDLTAICDASEACVSALLGNELEPLPEKVLHQRPNANAVHSMEKVMGIHSEYWRCLQRLSPTVGHSLIEAQKCENEEAETVTAMASLSVGVKPAEKRSEEEPMEEEPPL.

Residues 66-169 are a coiled coil; it reads REQQLQQELL…GKESAVASTE (104 aa). An interaction with MEF2A region spans residues 117 to 312; that stretch reads MLAMKHQQEL…NSSSGNVSTE (196 aa). Residues 132-162 show a composition bias toward basic and acidic residues; the sequence is KLERHRQEQELEKQHREQKLQQLKNKEKGKE. Disordered regions lie at residues 132–167, 204–225, and 239–327; these read KLER…AVAS, KTQH…ASYN, and PLRK…AETS. Residues 205-224 are compositionally biased toward polar residues; it reads TQHSSLDQSSPPQSGVSASY. Ser209 carries the post-translational modification Phosphoserine. Ser245 is subject to Phosphoserine; by CaMK4 and SIK1. The span at 258–273 shows a compositional bias: basic and acidic residues; it reads KVAERRSSPLLRRKDG. Residues 289–310 are compositionally biased toward low complexity; it reads SACSSAPGSGPSSPNSSSGNVS. Residues 348-353 carry the PxLPxI/L motif; mediates interaction with ANKRA2 and 14-3-3 proteins motif; it reads PSLPNI. Ser349 is subject to Phosphoserine. Position 466 is a phosphoserine; by CaMK4 and SIK1 (Ser466). Disordered regions lie at residues 508–530, 542–582, and 623–646; these read SKPS…ELRE, RLPG…RPAT, and RPLS…EPPT. Residues 515–530 are compositionally biased toward basic and acidic residues; that stretch reads RQPESHPEETEEELRE. Lys557 participates in a covalent cross-link: Glycyl lysine isopeptide (Lys-Gly) (interchain with G-Cter in SUMO). Residues Ser563, Ser630, and Ser631 each carry the phosphoserine modification. The span at 627–639 shows a compositional bias: polar residues; it reads RAQSSPASATFPM. Residues 653 to 1077 form a histone deacetylase region; sequence GLVYDTLMLK…EEPMEEEPPL (425 aa). The Zn(2+) site is built by Cys665, Cys667, His673, and Cys744. Residue His796 is part of the active site. The Nuclear export signal signature appears at 1044-1077; that stretch reads EEAETVTAMASLSVGVKPAEKRSEEEPMEEEPPL. The tract at residues 1052–1077 is disordered; the sequence is MASLSVGVKPAEKRSEEEPMEEEPPL.

The protein belongs to the histone deacetylase family. HD type 2 subfamily. As to quaternary structure, homodimer. Homodimerization via its N-terminal domain. Interacts with HDAC7. Interacts with MEF2A, MEF2C, MEF2D, MORC2 and NR2C1. Interacts with a 14-3-3 chaperone proteins in a phosphorylation dependent manner. Interacts with 14-3-3 protein YWHAB. Interacts with KDM5B and AHRR. Interacts with BTBD14B. Interacts with MYOCD. Interacts (via PxLPxI/L motif) with ANKRA2 (via ankyrin repeats). Interacts with CUL7 (as part of the 3M complex); negatively regulated by ANKRA2. Interacts with EP300 in the presence of TFAP2C. Interacts with HSPA1A and HSPA1B leading to their deacetylation at 'Lys-77'. Interacts with ZBTB7B; the interaction allows the recruitment of HDAC4 on CD8 loci for deacetylation and possible inhibition of CD8 genes expression. Interacts with DHX36. Interacts with SIK3; this interaction leads to HDAC4 retention in the cytoplasm. Post-translationally, phosphorylated by CaMK4 at Ser-245, Ser-466 and Ser-630. Phosphorylation at other residues by CaMK2D is required for the interaction with 14-3-3. Phosphorylation at Ser-349, within the PxLPxI/L motif, impairs the binding of ANKRA2 but generates a high-affinity docking site for 14-3-3. Sumoylation on Lys-557 is promoted by the E3 SUMO-protein ligase RANBP2, and prevented by phosphorylation by CaMK4.

The protein resides in the nucleus. It localises to the cytoplasm. The enzyme catalyses N(6)-acetyl-L-lysyl-[histone] + H2O = L-lysyl-[histone] + acetate. Its function is as follows. Responsible for the deacetylation of lysine residues on the N-terminal part of the core histones (H2A, H2B, H3 and H4). Histone deacetylation gives a tag for epigenetic repression and plays an important role in transcriptional regulation, cell cycle progression and developmental events. Histone deacetylases act via the formation of large multiprotein complexes. Involved in muscle maturation via its interaction with the myocyte enhancer factors such as MEF2A, MEF2C and MEF2D. Deacetylates HSPA1A and HSPA1B at 'Lys-77' leading to their preferential binding to co-chaperone STUB1. The sequence is that of Histone deacetylase 4 (Hdac4) from Rattus norvegicus (Rat).